The sequence spans 703 residues: Subtilisin-like protease SBT4.7 (703 aa).

The N-terminal stretch at Met-1–Ala-19 is a signal peptide. The propeptide at Val-20–Gln-107 is activation peptide. Positions Val-29–Leu-106 constitute an Inhibitor I9 domain. The 446-residue stretch at Ser-111–Ile-556 folds into the Peptidase S8 domain. The active-site Charge relay system is Asp-139. Asn-170 carries an N-linked (GlcNAc...) asparagine glycan. The Charge relay system role is filled by His-194. N-linked (GlcNAc...) asparagine glycosylation is found at Asn-217, Asn-360, Asn-416, and Asn-433. In terms of domain architecture, PA spans Lys-350–Leu-411. Catalysis depends on Ser-495, which acts as the Charge relay system. N-linked (GlcNAc...) asparagine glycans are attached at residues Asn-577, Asn-615, and Asn-633.

This sequence belongs to the peptidase S8 family. Post-translationally, the C-terminal propeptide is autocleaved.

It is found in the secreted. In Arabidopsis thaliana (Mouse-ear cress), this protein is Subtilisin-like protease SBT4.7.